Here is a 557-residue protein sequence, read N- to C-terminus: Leucine-rich glioma-inactivated protein 1 (557 aa).

The N-terminal stretch at 1–34 (MESERSKRMGNACIPLKRIAYFLCLLSALLLTEG) is a signal peptide. The LRRNT domain occupies 35–72 (KKPAKPKCPAVCTCTKDNALCENARSIPRTVPPDVISL). 3 LRR repeats span residues 92 to 113 (SLQLLLFTSNSFDVISDDAFIG), 116 to 137 (HLEYLFIENNNIKSISRHTFRG), and 140 to 161 (SLIHLSLANNNLQTLPKDIFKG). The region spanning 173 to 223 (NSFNCDCKLKWLVEWLGHTNATVEDIYCEGPPEYKKRKINSLSSKDFDCII) is the LRRCT domain. Residue Asn192 is glycosylated (N-linked (GlcNAc...) asparagine). 7 EAR repeats span residues 225 to 267 (EFAK…EWDH), 271 to 313 (TFRN…KRDS), 317 to 364 (KFIK…KWNG), 366 to 415 (GFYS…QWNK), 419 to 462 (SFTN…KWGG), 464 to 506 (SFQD…NWDA), and 510 to 552 (KFVK…KHVI). An N-linked (GlcNAc...) asparagine glycan is attached at Asn277. A glycan (N-linked (GlcNAc...) asparagine) is linked at Asn422.

As to quaternary structure, oligomer. Interacts with KCNA1 within a complex containing KCNA1, KCNA4 and KCNAB1. Part of a complex containing ADAM22, DLG4/PSD95 and CACNG2 (stargazin). Can bind to ADAM11 and ADAM23. In terms of processing, glycosylated.

It is found in the secreted. The protein resides in the synapse. It localises to the cytoplasm. Its function is as follows. Regulates voltage-gated potassium channels assembled from KCNA1, KCNA4 and KCNAB1. It slows down channel inactivation by precluding channel closure mediated by the KCNAB1 subunit. Ligand for ADAM22 that positively regulates synaptic transmission mediated by AMPA-type glutamate receptors. Plays a role in suppressing the production of MMP1/3 through the phosphatidylinositol 3-kinase/ERK pathway. The protein is Leucine-rich glioma-inactivated protein 1 (LGI1) of Pan troglodytes (Chimpanzee).